The primary structure comprises 168 residues: uncharacterized protein (168 aa).

Disordered regions lie at residues 1 to 81 and 119 to 150; these read MSSA…GRSW and RDLSESASTGSENLSRKASNQSQSQGRLSTVA. Residues 7-34 are compositionally biased toward low complexity; the sequence is SRTSRSKATGASSSSISSSIRASPSSSS. Positions 43-67 are enriched in basic residues; sequence TRRRRRRTGRRSTKRSIISPRRRRM. Polar residues predominate over residues 123 to 146; sequence ESASTGSENLSRKASNQSQSQGRL.

This is an uncharacterized protein from Human adenovirus C serotype 2 (HAdV-2).